The sequence spans 118 residues: Large ribosomal subunit protein uL18 (118 aa).

The disordered stretch occupies residues 1–25 (MISKPDKNKIRQKRHRRVRGKLSGT). Positions 10–20 (IRQKRHRRVRG) are enriched in basic residues.

It belongs to the universal ribosomal protein uL18 family. Part of the 50S ribosomal subunit; part of the 5S rRNA/L5/L18/L25 subcomplex. Contacts the 5S and 23S rRNAs.

Functionally, this is one of the proteins that bind and probably mediate the attachment of the 5S RNA into the large ribosomal subunit, where it forms part of the central protuberance. The sequence is that of Large ribosomal subunit protein uL18 from Streptococcus pyogenes serotype M5 (strain Manfredo).